Here is a 209-residue protein sequence, read N- to C-terminus: Large ribosomal subunit protein uL3 (209 aa).

The disordered stretch occupies residues 133–152 (THGNSLSHRVPGSIGQNQTP). The residue at position 150 (Q150) is an N5-methylglutamine.

This sequence belongs to the universal ribosomal protein uL3 family. Part of the 50S ribosomal subunit. Forms a cluster with proteins L14 and L19. Post-translationally, methylated by PrmB.

Its function is as follows. One of the primary rRNA binding proteins, it binds directly near the 3'-end of the 23S rRNA, where it nucleates assembly of the 50S subunit. This is Large ribosomal subunit protein uL3 from Yersinia pseudotuberculosis serotype O:1b (strain IP 31758).